A 585-amino-acid chain; its full sequence is Formate--tetrahydrofolate ligase (585 aa).

74 to 81 (TPLGEGKT) is an ATP binding site.

This sequence belongs to the formate--tetrahydrofolate ligase family.

It carries out the reaction (6S)-5,6,7,8-tetrahydrofolate + formate + ATP = (6R)-10-formyltetrahydrofolate + ADP + phosphate. Its pathway is one-carbon metabolism; tetrahydrofolate interconversion. The polypeptide is Formate--tetrahydrofolate ligase (Yersinia enterocolitica serotype O:8 / biotype 1B (strain NCTC 13174 / 8081)).